The sequence spans 233 residues: DNA-directed RNA polymerase I subunit RPA34 (233 aa).

Residues S10, S12, S14, and S60 each carry the phosphoserine modification. Residues 179–191 are compositionally biased toward basic and acidic residues; sequence DFHVAEEVKENKK. The interval 179-233 is disordered; that stretch reads DFHVAEEVKENKKEPKKRSHHDDEEESSEKKKKKKEKREKREKKDKKDKKKKHRD. Over residues 208 to 233 the composition is skewed to basic residues; that stretch reads KKKKKKEKREKREKKDKKDKKKKHRD.

This sequence belongs to the eukaryotic RPA34 RNA polymerase subunit family. In terms of assembly, component of the RNA polymerase I (Pol I) complex consisting of 14 subunits: RPA135, RPA190, RPC40, RPA14, RPB5, RPO26, RPA43, RPB8, RPA12, RPB10, RPC19, RPC10, RPA49 and RPA34. The complex is composed of a horseshoe-shaped core containing ten subunits (RPA135, RPA190, RPB5, RPO26, RPB8, RPB10, RPC10, RPA12, RPC19 and RPC40) where RPA135 and RPA190 form the DNA-binding cleft. Outside of the core, RPA14 and RPA43 form the stalk that mediates interactions with transcription initiation factors and newly synthesized RNA. Forms a TFIIF-like heterodimer with RPA49; the heterodimer formed by RPA34 and RPA49 can be dissociated from the Pol I core giving rise to a 12 subunit form A* of Pol I (formerly called pol A) that shows impaired transcript elongation activity and increased sensitivity to alpha-amanitin. The heterodimer formed by RPA34 and RPA49 stabilizes subunit RPA12 and stimulates RPA12-dependent RNA cleavage.

The protein resides in the nucleus. Its subcellular location is the nucleolus. Functionally, DNA-dependent RNA polymerases catalyze the transcription of DNA into RNA using the four ribonucleoside triphosphates as substrates. Component of RNA polymerase I (Pol I) which synthesizes ribosomal RNA precursors. Besides, RNA polymerase I has intrinsic RNA cleavage activity. The heterodimer formed by RPA34 and RPA49 stimulates transcript elongation by Pol I. The chain is DNA-directed RNA polymerase I subunit RPA34 (RPA34) from Saccharomyces cerevisiae (strain ATCC 204508 / S288c) (Baker's yeast).